The following is a 740-amino-acid chain: Folic acid synthesis protein fol1 (740 aa).

2 DHNA regions span residues 39–160 (DLIH…REID) and 161–280 (DQFF…SCFS). Residues 291 to 449 (IDNEAVYISL…EKIVDHDIKP (159 aa)) form an HPPK region. Residues 471-730 (TYIMAILNLT…DVYEMYKISK (260 aa)) form the Pterin-binding domain. Positions 473 to 740 (IMAILNLTPD…MSDAIWKEIY (268 aa)) are DHPS. Asn478 serves as a coordination point for Mg(2+). (7,8-dihydropterin-6-yl)methyl diphosphate-binding positions include Thr517, Asp552, Asn571, Asp643, Lys683, and 718–720 (RVH).

This sequence in the N-terminal section; belongs to the DHNA family. The protein in the central section; belongs to the HPPK family. It in the C-terminal section; belongs to the DHPS family. Mg(2+) is required as a cofactor.

The enzyme catalyses 7,8-dihydroneopterin = 6-hydroxymethyl-7,8-dihydropterin + glycolaldehyde. It carries out the reaction 6-hydroxymethyl-7,8-dihydropterin + ATP = (7,8-dihydropterin-6-yl)methyl diphosphate + AMP + H(+). The catalysed reaction is (7,8-dihydropterin-6-yl)methyl diphosphate + 4-aminobenzoate = 7,8-dihydropteroate + diphosphate. Its pathway is cofactor biosynthesis; tetrahydrofolate biosynthesis; 2-amino-4-hydroxy-6-hydroxymethyl-7,8-dihydropteridine diphosphate from 7,8-dihydroneopterin triphosphate: step 3/4. The protein operates within cofactor biosynthesis; tetrahydrofolate biosynthesis; 2-amino-4-hydroxy-6-hydroxymethyl-7,8-dihydropteridine diphosphate from 7,8-dihydroneopterin triphosphate: step 4/4. It functions in the pathway cofactor biosynthesis; tetrahydrofolate biosynthesis; 7,8-dihydrofolate from 2-amino-4-hydroxy-6-hydroxymethyl-7,8-dihydropteridine diphosphate and 4-aminobenzoate: step 1/2. In terms of biological role, catalyzes three sequential steps of tetrahydrofolate biosynthesis. The chain is Folic acid synthesis protein fol1 (fol1) from Pneumocystis carinii.